Here is a 174-residue protein sequence, read N- to C-terminus: Tat proofreading chaperone TtrD (174 aa).

The protein belongs to the TorD/DmsD family. In terms of assembly, monomer.

Its subcellular location is the cytoplasm. Functionally, binds specifically to the Tat signal peptide of the TtrA subunit of the tetrathionate reductase. This is Tat proofreading chaperone TtrD (ttrD) from Archaeoglobus fulgidus (strain ATCC 49558 / DSM 4304 / JCM 9628 / NBRC 100126 / VC-16).